We begin with the raw amino-acid sequence, 128 residues long: Large ribosomal subunit protein uL22 (128 aa).

The protein belongs to the universal ribosomal protein uL22 family. In terms of assembly, part of the 50S ribosomal subunit.

This protein binds specifically to 23S rRNA; its binding is stimulated by other ribosomal proteins, e.g. L4, L17, and L20. It is important during the early stages of 50S assembly. It makes multiple contacts with different domains of the 23S rRNA in the assembled 50S subunit and ribosome. Its function is as follows. The globular domain of the protein is located near the polypeptide exit tunnel on the outside of the subunit, while an extended beta-hairpin is found that lines the wall of the exit tunnel in the center of the 70S ribosome. The chain is Large ribosomal subunit protein uL22 from Nitrobacter winogradskyi (strain ATCC 25391 / DSM 10237 / CIP 104748 / NCIMB 11846 / Nb-255).